Consider the following 86-residue polypeptide: Anti-adapter protein IraP (86 aa).

A coiled-coil region spans residues 1–36 (MKNLIAELLVKLAEKEEESKELVAQVEALEIVVTAL).

It belongs to the IraP family. In terms of assembly, interacts with RssB.

The protein localises to the cytoplasm. In terms of biological role, inhibits RpoS proteolysis by regulating RssB activity, thereby increasing the stability of the sigma stress factor RpoS especially during phosphate starvation, but also in stationary phase and during nitrogen starvation. Its effect on RpoS stability is due to its interaction with RssB, which probably blocks the interaction of RssB with RpoS, and the consequent delivery of the RssB-RpoS complex to the ClpXP protein degradation pathway. In Cronobacter sakazakii (strain ATCC BAA-894) (Enterobacter sakazakii), this protein is Anti-adapter protein IraP.